Consider the following 476-residue polypeptide: Protein transport protein Sec61 subunit alpha-like 1 (476 aa).

The Cytoplasmic portion of the chain corresponds to 2–33 (AIKFLEVIKPFCAVLPEIQKPERKIQFREKVL). The helical transmembrane segment at 34–53 (WTAITLFIFLVCCQIPLFGI) threads the bilayer. Over 54 to 76 (MSSDSADPFYWMRVILASNRGTL) the chain is Lumenal. A helical transmembrane segment spans residues 77 to 96 (MELGISPIVTSGLIMQLLAG). The Cytoplasmic segment spans residues 97 to 117 (AKIIEVGDTPKDRALFNGAQK). Residues 118-138 (LFGMIITIGQAIVYVMTGMYG) form a helical membrane-spanning segment. Residues 139–144 (DPSEMG) lie on the Lumenal side of the membrane. The chain crosses the membrane as a helical span at residues 145–165 (AGICLLIIIQLFVAGLIVLLL). Residues 166 to 172 (DELLQKG) lie on the Cytoplasmic side of the membrane. Residues 173 to 193 (YGLGSGISLFIATNICETIVW) form a helical membrane-spanning segment. The Lumenal portion of the chain corresponds to 194–240 (KAFSPTTVNTGRGTEFEGAIIALFHLLATRTDKVRALREAFYRQNLP). Residues 241–261 (NLMNLIATVFVFAVVIYFQGF) form a helical membrane-spanning segment. The Cytoplasmic portion of the chain corresponds to 262–288 (RVDLPIKSARYRGQYNTYPIKLFYTSN). Residues 289–309 (IPIILQSALVSNLYVISQMLS) traverse the membrane as a helical segment. At 310 to 354 (TRFSGNFLVNLLGTWSDTSSGGPARAYPVGGLCYYLSPPESFGSV) the chain is on the lumenal side. Residues 355 to 375 (LDDPVHAVIYIVFMLGSCAFF) form a helical membrane-spanning segment. Residues 376–420 (SKTWIEVSGSSAKDVAKQLKEQQMVMRGHRETSMVHELNRYIPTA) lie on the Cytoplasmic side of the membrane. The chain crosses the membrane as a helical span at residues 421–441 (AAFGGLCIGGLSVMADFLGAI). Over 442–445 (GSGT) the chain is Lumenal. The helical transmembrane segment at 446–462 (GILLAVTIIYQYFEIFV) threads the bilayer. Residues 463-476 (KEQSEVGSMGALLF) are Cytoplasmic-facing.

The protein belongs to the SecY/SEC61-alpha family. The SEC61 channel-forming translocon complex consists of channel-forming core components SEC61A1, SEC61B and SEC61G and different auxiliary components such as SEC62 and SEC63. The SEC61 channel associates with the multi-pass translocon (MPT) complex.

The protein localises to the endoplasmic reticulum membrane. Functionally, component of SEC61 channel-forming translocon complex that mediates transport of signal peptide-containing precursor polypeptides across the endoplasmic reticulum (ER). Forms a ribosome receptor and a gated pore in the ER membrane, both functions required for cotranslational translocation of nascent polypeptides. May cooperate with auxiliary protein SEC62, SEC63 and HSPA5/BiP to enable post-translational transport of small presecretory proteins. The SEC61 channel is also involved in ER membrane insertion of transmembrane proteins: it mediates membrane insertion of the first few transmembrane segments of proteins, while insertion of subsequent transmembrane regions of multi-pass membrane proteins is mediated by the multi-pass translocon (MPT) complex. Plays a role in the pronephric kidney tubule development. The polypeptide is Protein transport protein Sec61 subunit alpha-like 1 (sec61al1) (Danio rerio (Zebrafish)).